The following is a 212-amino-acid chain: Endonuclease III (212 aa).

A HhH domain is found at 108–127 (FKELVKLPGVGRKTANVVLN). Cys-187, Cys-194, Cys-197, and Cys-203 together coordinate [4Fe-4S] cluster.

This sequence belongs to the Nth/MutY family. [4Fe-4S] cluster is required as a cofactor.

The enzyme catalyses 2'-deoxyribonucleotide-(2'-deoxyribose 5'-phosphate)-2'-deoxyribonucleotide-DNA = a 3'-end 2'-deoxyribonucleotide-(2,3-dehydro-2,3-deoxyribose 5'-phosphate)-DNA + a 5'-end 5'-phospho-2'-deoxyribonucleoside-DNA + H(+). In terms of biological role, DNA repair enzyme that has both DNA N-glycosylase activity and AP-lyase activity. The DNA N-glycosylase activity releases various damaged pyrimidines from DNA by cleaving the N-glycosidic bond, leaving an AP (apurinic/apyrimidinic) site. The AP-lyase activity cleaves the phosphodiester bond 3' to the AP site by a beta-elimination, leaving a 3'-terminal unsaturated sugar and a product with a terminal 5'-phosphate. The chain is Endonuclease III from Rickettsia prowazekii (strain Madrid E).